Consider the following 290-residue polypeptide: 6-phospho-5-dehydro-2-deoxy-D-gluconate aldolase (290 aa).

Asp-85 functions as the Proton donor in the catalytic mechanism. 2 residues coordinate Zn(2+): His-86 and His-180. Gly-181 is a dihydroxyacetone phosphate binding site. Residue His-208 coordinates Zn(2+). Residues 209–211 (GAS) and 230–233 (NINT) each bind dihydroxyacetone phosphate. Position 233 is a phosphothreonine (Thr-233).

The protein belongs to the class II fructose-bisphosphate aldolase family. IolJ subfamily. The cofactor is Zn(2+).

It catalyses the reaction 6-phospho-5-dehydro-2-deoxy-D-gluconate = 3-oxopropanoate + dihydroxyacetone phosphate. Its pathway is polyol metabolism; myo-inositol degradation into acetyl-CoA; acetyl-CoA from myo-inositol: step 6/7. Functionally, produces dihydroxyacetone phosphate (DHAP or glycerone phosphate) and malonic semialdehyde (MSA or 3-oxopropanoate) from 6-phospho-5-dehydro-2-deoxy-D-gluconate (DKGP). The chain is 6-phospho-5-dehydro-2-deoxy-D-gluconate aldolase (iolJ) from Bacillus velezensis (strain DSM 23117 / BGSC 10A6 / LMG 26770 / FZB42) (Bacillus amyloliquefaciens subsp. plantarum).